The sequence spans 427 residues: Serine hydroxymethyltransferase (427 aa).

Residue 120 to 122 (GHI) participates in (6S)-5,6,7,8-tetrahydrofolate binding. Lys226 is subject to N6-(pyridoxal phosphate)lysine.

It belongs to the SHMT family. As to quaternary structure, homodimer. The cofactor is pyridoxal 5'-phosphate.

The protein localises to the cytoplasm. It functions in the pathway amino-acid biosynthesis; glycine biosynthesis; glycine from L-serine: step 1/1. Catalyzes the reversible interconversion of serine and glycine with a modified folate serving as the one-carbon carrier. Also exhibits a pteridine-independent aldolase activity toward beta-hydroxyamino acids, producing glycine and aldehydes, via a retro-aldol mechanism. In Pyrococcus horikoshii (strain ATCC 700860 / DSM 12428 / JCM 9974 / NBRC 100139 / OT-3), this protein is Serine hydroxymethyltransferase.